The primary structure comprises 340 residues: GATA transcription factor 20 (340 aa).

Residues 1–88 form a disordered region; sequence MSHHDGSKPY…MEEDEDAQHH (88 aa). Low complexity predominate over residues 25 to 47; the sequence is ADDAAAHVAPTVDHLAAVAAEAE. A compositionally biased stretch (basic and acidic residues) spans 48–60; it reads AMARFEEEHRALG. A compositionally biased stretch (acidic residues) spans 61 to 84; that stretch reads AEEEYEEEEDELEEEEEEMEEDED. In terms of domain architecture, Tify spans 121-156; it reads QPMASNQLTLSFQGEVYVFDSVSPDKVQAVLLLLGG. The CCT domain maps to 182 to 224; it reads RVASLMRFREKRKERNFDKKIRYSVRKEVALRMQRNRGQFTSS. The interval 215-253 is disordered; it reads QRNRGQFTSSKPKGDEATSELTASDGSPNWGSVEGRPPS. Positions 233–244 are enriched in polar residues; sequence SELTASDGSPNW. The segment at 257–284 adopts a GATA-type zinc-finger fold; that stretch reads CHHCGINAKATPMMRRGPDGPRTLCNAC. Over residues 313–325 the composition is skewed to polar residues; sequence DGNGSAAAPTTEQ. The disordered stretch occupies residues 313–340; sequence DGNGSAAAPTTEQEIPAPATVNGHESST.

Belongs to the type IV zinc-finger family. Class C subfamily.

It localises to the nucleus. Functionally, transcriptional activator that specifically binds 5'-GATA-3' or 5'-GAT-3' motifs within gene promoters. In Oryza sativa subsp. japonica (Rice), this protein is GATA transcription factor 20.